The sequence spans 280 residues: Foldase protein PrsA 4 (280 aa).

The signal sequence occupies residues 1–21 (MKRKKLVIGSILMGMTLSLSA). C22 is lipidated: N-palmitoyl cysteine. A lipid anchor (S-diacylglycerol cysteine) is attached at C22. Residues 132 to 222 (KPKLQVSHIL…FGYHIIKLTD (91 aa)) enclose the PpiC domain.

It belongs to the PrsA family.

The protein localises to the cell membrane. It catalyses the reaction [protein]-peptidylproline (omega=180) = [protein]-peptidylproline (omega=0). Functionally, plays a major role in protein secretion by helping the post-translocational extracellular folding of several secreted proteins. The sequence is that of Foldase protein PrsA 4 (prsA4) from Bacillus cereus (strain ATCC 14579 / DSM 31 / CCUG 7414 / JCM 2152 / NBRC 15305 / NCIMB 9373 / NCTC 2599 / NRRL B-3711).